The sequence spans 424 residues: Glutathione reductase (424 aa).

Lysine 8 is a binding site for FAD. Glutathione is bound at residue tyrosine 56. Alanine 72 is a binding site for FAD. Alanine 137, isoleucine 140, glutamate 143, arginine 160, arginine 166, and glycine 236 together coordinate NADP(+). Residue aspartate 277 coordinates FAD. Position 283 (leucine 283) interacts with NADP(+). FAD is bound at residue threonine 285. Arginine 293 serves as a coordination point for glutathione. Valine 316 is a binding site for NADP(+). Residue histidine 413 coordinates FAD. Histidine 413 (proton acceptor) is an active-site residue.

The protein belongs to the class-I pyridine nucleotide-disulfide oxidoreductase family. As to quaternary structure, homodimer; disulfide-linked. It depends on FAD as a cofactor.

It localises to the mitochondrion. Its subcellular location is the cytoplasm. The enzyme catalyses 2 glutathione + NADP(+) = glutathione disulfide + NADPH + H(+). In terms of biological role, catalyzes the reduction of glutathione disulfide (GSSG) to reduced glutathione (GSH). Constitutes the major mechanism to maintain a high GSH:GSSG ratio in the cytosol. This Rattus norvegicus (Rat) protein is Glutathione reductase (Gsr).